Here is a 173-residue protein sequence, read N- to C-terminus: NADH dehydrogenase [ubiquinone] 1 alpha subcomplex assembly factor 4 (173 aa).

Residue Gly2 is the site of N-myristoyl glycine attachment. The interval 16–40 is disordered; it reads KRAEREISKRKPSMAPKHPSTRDLL. Residue Ser35 is modified to Phosphoserine.

Belongs to the NDUFAF4 family. As to quaternary structure, binds calmodulin. Interacts with NDUFAF3. Phosphorylated on serine. Prolactin stimulate serine phosphorylation.

The protein localises to the mitochondrion. It is found in the membrane. May be involved in cell proliferation and survival of hormone-dependent tumor cells. Involved in the assembly of mitochondrial NADH:ubiquinone oxidoreductase complex (complex I). The protein is NADH dehydrogenase [ubiquinone] 1 alpha subcomplex assembly factor 4 (Ndufaf4) of Mus musculus (Mouse).